A 478-amino-acid chain; its full sequence is Leukotoxin secretion protein D (478 aa).

At 1–59 (MKIWLSGIYEFFLRYKNTWAEVWKIRKELDHPNRKKDESEFLPAHLDLIETPVSKKPRL) the chain is on the cytoplasmic side. A helical membrane pass occupies residues 60–80 (IAYLIMLFLVVAIVLASVSKV). At 81-478 (EIVATAPGKL…ESVTESLRER (398 aa)) the chain is on the periplasmic side.

This sequence belongs to the membrane fusion protein (MFP) (TC 8.A.1) family.

The protein localises to the cell inner membrane. In terms of biological role, involved in the transport of the Leukotoxin. The polypeptide is Leukotoxin secretion protein D (lktD) (Mannheimia haemolytica (Pasteurella haemolytica)).